Reading from the N-terminus, the 357-residue chain is COP9 signalosome complex subunit 5a (357 aa).

Methionine 1 bears the N-acetylmethionine mark. The MPN domain occupies 59 to 196; it reads VHISALALLK…IGAFRTYPEG (138 aa). Histidine 142, histidine 144, and aspartate 155 together coordinate Zn(2+). The JAMM motif motif lies at 142 to 155; that stretch reads HSHPGYGCWLSGID. Residues 338–357 form a disordered region; it reads ARQSKKSADDSSDPEPMITS.

This sequence belongs to the peptidase M67A family. CSN5 subfamily. As to quaternary structure, component of the CSN complex, probably composed of CSN1, CSN2, CSN3, CSN4, CSN5 (CSN5A or CSN5B), CSN6 (CSN6A or CSN6B), CSN7 and CSN8. CSN5A or CSN5B are present within distinct CSN complexes each containing only one copy of CSN5. Interacts with itself. In the complex, it is located in the center and probably interacts directly with CSN4 and CSN6A or CSN6B. Present also in subcomplex forms which inculdes CSN3. Also exists as monomeric form. Interacts with CYT1 in vitro, but not in planta. A divalent metal cation is required as a cofactor. In terms of tissue distribution, ubiquitously expressed. Highly expressed in flowers and roots. Expressed at lower level in seedlings and siliques.

It is found in the cytoplasm. The protein localises to the nucleus. Its function is as follows. Probable protease subunit of the COP9 signalosome complex (CSN), a complex involved in various cellular and developmental processes such as photomorphogenesis and auxin and jasmonate responses. The CSN complex is an essential regulator of the ubiquitin (Ubl) conjugation pathway by mediating the deneddylation of the cullin subunits of the SCF-type E3 ligase complexes, leading to decrease the Ubl ligase activity of SCF. In the complex, it probably acts as the catalytic center that mediates the cleavage of Nedd8 from cullins. It however has no metalloprotease activity by itself and requires the other subunits of the CSN complex. The CSN complex is involved in repression of photomorphogenesis in darkness by regulating the activity of COP1-containing Ubl ligase complexes. The complex is also required for degradation of PSIAA6 by regulating the activity of the Ubl ligase SCF-TIR complex. Involved in CSN's deneddylation/derubylation activity. Required for the deneddylation of all cullins. Essential for the structural integrity of the CSN holocomplex. This chain is COP9 signalosome complex subunit 5a, found in Arabidopsis thaliana (Mouse-ear cress).